The following is a 1024-amino-acid chain: Probable alpha-mannosidase At5g13980 (1024 aa).

The N-terminal stretch at 1-21 (MDLAKFLCWIVLLLGISLVES) is a signal peptide. The N-linked (GlcNAc...) asparagine glycan is linked to Asn27. 2 residues coordinate Zn(2+): His46 and Asp48. Asn63 carries N-linked (GlcNAc...) asparagine glycosylation. Asp168 is a Zn(2+) binding site. A glycan (N-linked (GlcNAc...) asparagine) is linked at Asn278. His410 contributes to the Zn(2+) binding site. An intrachain disulfide couples Cys461 to Cys469. Residues Asn465, Asn475, Asn637, Asn658, Asn733, and Asn823 are each glycosylated (N-linked (GlcNAc...) asparagine). Cys827 and Cys832 are oxidised to a cystine.

The protein belongs to the glycosyl hydrolase 38 family. In terms of assembly, homodimer. Zn(2+) serves as cofactor.

The catalysed reaction is Hydrolysis of terminal, non-reducing alpha-D-mannose residues in alpha-D-mannosides.. Functionally, liberates mannose from p-nitrophenyl-alpha-D-mannoside in vitro. The chain is Probable alpha-mannosidase At5g13980 from Arabidopsis thaliana (Mouse-ear cress).